The following is a 282-amino-acid chain: Undecaprenyl-diphosphatase (282 aa).

8 helical membrane passes run 2–22 (FDFIKSIIIGIVEGLTEFLPV), 47–67 (FTAVFDYAIQLGAIFAVIQLY), 90–110 (WIKVIVGVLPAMVFGLLLNNF), 115–135 (LLNPWVVSATLIIYGIAFIVI), 152–172 (ITFKMALFIGLFQVLSLVPGT), 190–210 (FVAAEFSFFLSIPVMFGVTIL), 225–245 (AQLFVMLIGFVVSWVVALFAI), and 259–279 (IFGWYRIVVGILFLILGIAGL).

This sequence belongs to the UppP family.

Its subcellular location is the cell membrane. The enzyme catalyses di-trans,octa-cis-undecaprenyl diphosphate + H2O = di-trans,octa-cis-undecaprenyl phosphate + phosphate + H(+). Its function is as follows. Catalyzes the dephosphorylation of undecaprenyl diphosphate (UPP). Confers resistance to bacitracin. In Leuconostoc citreum (strain KM20), this protein is Undecaprenyl-diphosphatase.